Reading from the N-terminus, the 920-residue chain is Isoleucine--tRNA ligase (920 aa).

Positions 57–67 (PYANGDIHLGH) match the 'HIGH' region motif. Residue E560 participates in L-isoleucyl-5'-AMP binding. Positions 601–605 (KMSKS) match the 'KMSKS' region motif. K604 contacts ATP. Residues C890, C893, C910, and C913 each contribute to the Zn(2+) site.

The protein belongs to the class-I aminoacyl-tRNA synthetase family. IleS type 1 subfamily. Monomer. Requires Zn(2+) as cofactor.

It localises to the cytoplasm. The catalysed reaction is tRNA(Ile) + L-isoleucine + ATP = L-isoleucyl-tRNA(Ile) + AMP + diphosphate. Catalyzes the attachment of isoleucine to tRNA(Ile). As IleRS can inadvertently accommodate and process structurally similar amino acids such as valine, to avoid such errors it has two additional distinct tRNA(Ile)-dependent editing activities. One activity is designated as 'pretransfer' editing and involves the hydrolysis of activated Val-AMP. The other activity is designated 'posttransfer' editing and involves deacylation of mischarged Val-tRNA(Ile). The chain is Isoleucine--tRNA ligase from Caldicellulosiruptor saccharolyticus (strain ATCC 43494 / DSM 8903 / Tp8T 6331).